The sequence spans 507 residues: ATP synthase subunit alpha, chloroplastic (507 aa).

An ATP-binding site is contributed by Gly170 to Thr177.

Belongs to the ATPase alpha/beta chains family. In terms of assembly, F-type ATPases have 2 components, CF(1) - the catalytic core - and CF(0) - the membrane proton channel. CF(1) has five subunits: alpha(3), beta(3), gamma(1), delta(1), epsilon(1). CF(0) has four main subunits: a, b, b' and c.

It is found in the plastid. The protein localises to the chloroplast thylakoid membrane. It carries out the reaction ATP + H2O + 4 H(+)(in) = ADP + phosphate + 5 H(+)(out). Functionally, produces ATP from ADP in the presence of a proton gradient across the membrane. The alpha chain is a regulatory subunit. In Nicotiana tabacum (Common tobacco), this protein is ATP synthase subunit alpha, chloroplastic.